Consider the following 309-residue polypeptide: NADH-quinone oxidoreductase subunit C (309 aa).

Residues 198–309 (LPGDEKAVPP…RTRKKKEDGE (112 aa)) are disordered. Residues 220-230 (TKGDAKADVPK) are compositionally biased toward basic and acidic residues. Positions 246-261 (DAAAKPVAEAAAPAAT) are enriched in low complexity.

This sequence belongs to the complex I 30 kDa subunit family. NDH-1 is composed of 14 different subunits. Subunits NuoB, C, D, E, F, and G constitute the peripheral sector of the complex.

The protein resides in the cell inner membrane. It catalyses the reaction a quinone + NADH + 5 H(+)(in) = a quinol + NAD(+) + 4 H(+)(out). Functionally, NDH-1 shuttles electrons from NADH, via FMN and iron-sulfur (Fe-S) centers, to quinones in the respiratory chain. The immediate electron acceptor for the enzyme in this species is believed to be ubiquinone. Couples the redox reaction to proton translocation (for every two electrons transferred, four hydrogen ions are translocated across the cytoplasmic membrane), and thus conserves the redox energy in a proton gradient. The polypeptide is NADH-quinone oxidoreductase subunit C (Novosphingobium aromaticivorans (strain ATCC 700278 / DSM 12444 / CCUG 56034 / CIP 105152 / NBRC 16084 / F199)).